Here is a 277-residue protein sequence, read N- to C-terminus: MIIRYYKPYTSGTRKRSVSNFSEITKSNPEKYLTFFVHRSKGRNSRGVITCRTLGGGHKRLYRRIEFKRNKLGILGKVISIEYDPNRNARIALIYYKNGDKSYIIHPFDLCVGNNIISDFFSPIKIGNSLPISKIPLGTIIHNVEFEPGKGGQIARAAGTFVQILANEGKFVTITMPSGEVRLLRRYCWATIGQVGNLDHSNVVLGKAGRNRWLGNKPTVRGVAMNPCDHPHGGGEGRSPIGRPKPVTPWGKPALGKKTRSPKRFSNKYIIRSRKMV.

Residues 225 to 277 (MNPCDHPHGGGEGRSPIGRPKPVTPWGKPALGKKTRSPKRFSNKYIIRSRKMV) form a disordered region. The span at 255 to 277 (LGKKTRSPKRFSNKYIIRSRKMV) shows a compositional bias: basic residues.

The protein belongs to the universal ribosomal protein uL2 family. In terms of assembly, part of the 50S ribosomal subunit.

The protein localises to the plastid. It is found in the chloroplast. The protein is Large ribosomal subunit protein uL2c (rpl2) of Euglena gracilis.